A 659-amino-acid chain; its full sequence is Threonine--tRNA ligase (659 aa).

In terms of domain architecture, TGS spans 7–70 (VQATVTVTFP…TDDATVEIIT (64 aa)). The catalytic stretch occupies residues 255 to 557 (DHRKLGAELE…LIEHTAGNFP (303 aa)). Zn(2+) is bound by residues C353, H404, and H534.

Belongs to the class-II aminoacyl-tRNA synthetase family. Homodimer. Zn(2+) serves as cofactor.

It localises to the cytoplasm. The enzyme catalyses tRNA(Thr) + L-threonine + ATP = L-threonyl-tRNA(Thr) + AMP + diphosphate + H(+). Its function is as follows. Catalyzes the attachment of threonine to tRNA(Thr) in a two-step reaction: L-threonine is first activated by ATP to form Thr-AMP and then transferred to the acceptor end of tRNA(Thr). Also edits incorrectly charged L-seryl-tRNA(Thr). The protein is Threonine--tRNA ligase of Chlorobium phaeobacteroides (strain BS1).